A 552-amino-acid polypeptide reads, in one-letter code: Histone deacetylase 15 (552 aa).

Residues 86 to 115 form a RanBP2-type zinc finger; sequence EFVKWCCVNCTMSNPGDMVHCCICGEHKES. A histone deacetylase region spans residues 149–462; sequence STAVGFDERM…ATAVIKVLLG (314 aa). H277 functions as the Proton donor/acceptor in the catalytic mechanism. Positions 313, 315, and 404 each coordinate Zn(2+).

The protein belongs to the histone deacetylase family. HD type 2 subfamily. Interacts with PIF3 in the dark. Interacts with HY5. Interacts with MYB96. Forms homotetramers. Requires Zn(2+) as cofactor. In terms of tissue distribution, expressed in stems, leaves, flowers, siliques and mature seeds.

It is found in the nucleus. It localises to the cytoplasm. The catalysed reaction is N(6)-acetyl-L-lysyl-[histone] + H2O = L-lysyl-[histone] + acetate. Inhibited by trichostatin A (TSA), a well-known histone deacetylase inhibitor. In terms of biological role, responsible for the deacetylation of lysine residues on the N-terminal part of the core histones (H2A, H2B, H3 and H4). Histone deacetylation gives a tag for epigenetic repression and plays an important role in transcriptional regulation, cell cycle progression and developmental events. Histone deacetylases act via the formation of large multiprotein complexes. Represses chlorophyll biosynthesis and photosynthesis in the dark. Is recruited by PIF3 to the promoters of chlorophyll biosynthetic and photosynthetic genes, and represses their transcription by histone deacetylation. Involved in the repression of hypocotyl cell elongation to promote photomorphogenesis. Is recruited by HY5 to the promoters of a subset of cell wall organization and auxin signaling-related genes, and represses gene expression by decreasing the levels of histone H4 acetylation in a light-dependent manner. Promotes abscisic acid (ABA) signaling. Is recruited by MYB96 to the promoters of a subset of Rho GTPase (ROP) genes, which repress ABA signaling at the early stages of signal transduction. Represses ROP expression by removing acetyl groups of histone H3 and H4 from the cognate regions, particularly in the presence of ABA. Represses the plant response to elevated ambient temperature by directly repressing warm temperature-responsive genes. The polypeptide is Histone deacetylase 15 (Arabidopsis thaliana (Mouse-ear cress)).